The sequence spans 323 residues: MAVTGACTNKKLYLAAPRGYCAGVDRAVVTVEKALEVYGAPVYVRKQIVHNRHVVETLEGRGAIFVDELDEVPDDALVVFSAHGVSPQVKKEATDRGLRTIDATCPLVTKVHHEAKRFANQDTQILLIGHAGHEEVEGTTGEAPENITLVQTPADVDGLALDRDRPVAWLSQTTLSVDETVETVDRIRDLHPQLIDPPSDDICYATQNRQHAVKQMAPQCDLVIVVGSKNSSNTGRLVEVALESGAKASYRVDNAGEIEETWLDGVSTIGVTSGASVPEALVQGVIDLLISKGWPPAEEETLIEESLSFALPPQLRKRRTTAK.

Residue C21 coordinates [4Fe-4S] cluster. Positions 50 and 83 each coordinate (2E)-4-hydroxy-3-methylbut-2-enyl diphosphate. Dimethylallyl diphosphate contacts are provided by H50 and H83. Residues H50 and H83 each contribute to the isopentenyl diphosphate site. C105 serves as a coordination point for [4Fe-4S] cluster. (2E)-4-hydroxy-3-methylbut-2-enyl diphosphate is bound at residue H133. Residue H133 coordinates dimethylallyl diphosphate. Position 133 (H133) interacts with isopentenyl diphosphate. E135 functions as the Proton donor in the catalytic mechanism. T173 provides a ligand contact to (2E)-4-hydroxy-3-methylbut-2-enyl diphosphate. Position 203 (C203) interacts with [4Fe-4S] cluster. Positions 231, 232, 233, and 276 each coordinate (2E)-4-hydroxy-3-methylbut-2-enyl diphosphate. S231, S232, N233, and S276 together coordinate dimethylallyl diphosphate. Positions 231, 232, 233, and 276 each coordinate isopentenyl diphosphate.

It belongs to the IspH family. It depends on [4Fe-4S] cluster as a cofactor.

It carries out the reaction isopentenyl diphosphate + 2 oxidized [2Fe-2S]-[ferredoxin] + H2O = (2E)-4-hydroxy-3-methylbut-2-enyl diphosphate + 2 reduced [2Fe-2S]-[ferredoxin] + 2 H(+). It catalyses the reaction dimethylallyl diphosphate + 2 oxidized [2Fe-2S]-[ferredoxin] + H2O = (2E)-4-hydroxy-3-methylbut-2-enyl diphosphate + 2 reduced [2Fe-2S]-[ferredoxin] + 2 H(+). The protein operates within isoprenoid biosynthesis; dimethylallyl diphosphate biosynthesis; dimethylallyl diphosphate from (2E)-4-hydroxy-3-methylbutenyl diphosphate: step 1/1. Its pathway is isoprenoid biosynthesis; isopentenyl diphosphate biosynthesis via DXP pathway; isopentenyl diphosphate from 1-deoxy-D-xylulose 5-phosphate: step 6/6. Functionally, catalyzes the conversion of 1-hydroxy-2-methyl-2-(E)-butenyl 4-diphosphate (HMBPP) into a mixture of isopentenyl diphosphate (IPP) and dimethylallyl diphosphate (DMAPP). Acts in the terminal step of the DOXP/MEP pathway for isoprenoid precursor biosynthesis. This Cutibacterium acnes (strain DSM 16379 / KPA171202) (Propionibacterium acnes) protein is 4-hydroxy-3-methylbut-2-enyl diphosphate reductase.